The following is a 136-amino-acid chain: Large-conductance mechanosensitive channel (136 aa).

The next 4 membrane-spanning stretches (helical) occupy residues 9–29, 32–52, 54–74, and 79–99; these read AFAS…GAAF, IVSS…LGGV, FSDL…VVIA, and IQTV…LKAI.

The protein belongs to the MscL family. In terms of assembly, homopentamer.

It is found in the cell inner membrane. Channel that opens in response to stretch forces in the membrane lipid bilayer. May participate in the regulation of osmotic pressure changes within the cell. The sequence is that of Large-conductance mechanosensitive channel from Vibrio cholerae serotype O1 (strain ATCC 39541 / Classical Ogawa 395 / O395).